The following is a 314-amino-acid chain: Ribosomal RNA small subunit methyltransferase H (314 aa).

S-adenosyl-L-methionine-binding positions include 36–38, aspartate 56, phenylalanine 82, aspartate 104, and glutamine 111; that span reads GGH.

The protein belongs to the methyltransferase superfamily. RsmH family.

It is found in the cytoplasm. It carries out the reaction cytidine(1402) in 16S rRNA + S-adenosyl-L-methionine = N(4)-methylcytidine(1402) in 16S rRNA + S-adenosyl-L-homocysteine + H(+). Functionally, specifically methylates the N4 position of cytidine in position 1402 (C1402) of 16S rRNA. In Ectopseudomonas mendocina (strain ymp) (Pseudomonas mendocina), this protein is Ribosomal RNA small subunit methyltransferase H.